The chain runs to 156 residues: MPRRRVVGQRKILPDPKFGSELLAKFINVVMVDGKKSVSESIVYGALEIIANKSGKDHLATFEGALDNIRPNVEVKSRRVGGSTYQVPVEVRPVRRNALAMRWLVEAARKRGEKSMAQRLAGELLDAADNKGSAVKKREDVHRMAEANKAFAHYRW.

It belongs to the universal ribosomal protein uS7 family. In terms of assembly, part of the 30S ribosomal subunit. Contacts proteins S9 and S11.

One of the primary rRNA binding proteins, it binds directly to 16S rRNA where it nucleates assembly of the head domain of the 30S subunit. Is located at the subunit interface close to the decoding center, probably blocks exit of the E-site tRNA. The chain is Small ribosomal subunit protein uS7 from Tolumonas auensis (strain DSM 9187 / NBRC 110442 / TA 4).